A 559-amino-acid polypeptide reads, in one-letter code: Glucose-6-phosphate isomerase 2 (559 aa).

Glu-367 (proton donor) is an active-site residue. Catalysis depends on residues His-398 and Lys-522.

The protein belongs to the GPI family.

It is found in the cytoplasm. The catalysed reaction is alpha-D-glucose 6-phosphate = beta-D-fructose 6-phosphate. It functions in the pathway carbohydrate biosynthesis; gluconeogenesis. The protein operates within carbohydrate degradation; glycolysis; D-glyceraldehyde 3-phosphate and glycerone phosphate from D-glucose: step 2/4. Functionally, catalyzes the reversible isomerization of glucose-6-phosphate to fructose-6-phosphate. In Chromohalobacter salexigens (strain ATCC BAA-138 / DSM 3043 / CIP 106854 / NCIMB 13768 / 1H11), this protein is Glucose-6-phosphate isomerase 2.